A 284-amino-acid polypeptide reads, in one-letter code: NAD kinase (284 aa).

The active-site Proton acceptor is the Asp-61. NAD(+) is bound by residues 61–62 (DG), Arg-66, 136–137 (ND), Arg-147, Lys-164, Asp-166, and Leu-201.

Belongs to the NAD kinase family. The cofactor is a divalent metal cation.

The protein localises to the cytoplasm. It carries out the reaction NAD(+) + ATP = ADP + NADP(+) + H(+). In terms of biological role, involved in the regulation of the intracellular balance of NAD and NADP, and is a key enzyme in the biosynthesis of NADP. Catalyzes specifically the phosphorylation on 2'-hydroxyl of the adenosine moiety of NAD to yield NADP. The chain is NAD kinase from Dehalococcoides mccartyi (strain ATCC BAA-2100 / JCM 16839 / KCTC 5957 / BAV1).